Here is a 409-residue protein sequence, read N- to C-terminus: Elongation factor Tu, cyanelle (409 aa).

The tr-type G domain occupies 10–214; it reads KPHVNIGTIG…AVDEYIPTPE (205 aa). The segment at 19–26 is G1; the sequence is GHVDHGKT. 19-26 serves as a coordination point for GTP; the sequence is GHVDHGKT. Thr-26 is a binding site for Mg(2+). Positions 60–64 are G2; the sequence is GITIN. The G3 stretch occupies residues 81–84; the sequence is DCPG. Residues 81–85 and 136–139 each bind GTP; these read DCPGH and NKED. The tract at residues 136-139 is G4; it reads NKED. The G5 stretch occupies residues 174–176; the sequence is SAL.

It belongs to the TRAFAC class translation factor GTPase superfamily. Classic translation factor GTPase family. EF-Tu/EF-1A subfamily.

It is found in the plastid. It localises to the cyanelle. It carries out the reaction GTP + H2O = GDP + phosphate + H(+). GTP hydrolase that promotes the GTP-dependent binding of aminoacyl-tRNA to the A-site of ribosomes during protein biosynthesis. The polypeptide is Elongation factor Tu, cyanelle (tufA) (Cyanophora paradoxa).